Reading from the N-terminus, the 439-residue chain is Probable cinnamyl alcohol dehydrogenase 8C (439 aa).

A Zn(2+)-binding site is contributed by C120. T122 is an NADP(+) binding site. Residues H142, E143, C173, C176, C179, C187, and C239 each contribute to the Zn(2+) site. NADP(+) is bound by residues T243, 264-269 (GLGGLG), 287-292 (STSPGK), T327, G351, and 374-376 (NCV).

The protein belongs to the zinc-containing alcohol dehydrogenase family. In terms of assembly, homodimer. Zn(2+) serves as cofactor.

The enzyme catalyses (E)-cinnamyl alcohol + NADP(+) = (E)-cinnamaldehyde + NADPH + H(+). The catalysed reaction is (E)-coniferol + NADP(+) = (E)-coniferaldehyde + NADPH + H(+). It catalyses the reaction (E)-sinapyl alcohol + NADP(+) = (E)-sinapaldehyde + NADPH + H(+). It carries out the reaction (E)-4-coumaroyl alcohol + NADP(+) = (E)-4-coumaraldehyde + NADPH + H(+). The enzyme catalyses (E)-caffeyl alcohol + NADP(+) = (E)-caffeyl aldehyde + NADPH + H(+). It functions in the pathway aromatic compound metabolism; phenylpropanoid biosynthesis. Involved in lignin biosynthesis. Catalyzes the final step specific for the production of lignin monomers. Catalyzes the NADPH-dependent reduction of coniferaldehyde, 5-hydroxyconiferaldehyde, sinapaldehyde, 4-coumaraldehyde and caffeyl aldehyde to their respective alcohols. The polypeptide is Probable cinnamyl alcohol dehydrogenase 8C (Oryza sativa subsp. japonica (Rice)).